A 109-amino-acid polypeptide reads, in one-letter code: Membrane-bound lysozyme inhibitor of C-type lysozyme (109 aa).

An N-terminal signal peptide occupies residues 1–17; the sequence is MTMKKLLIIILPVLLSG. Cys18 carries N-palmitoyl cysteine lipidation. Cys18 is lipidated: S-diacylglycerol cysteine. Residues Cys37 and Cys102 are joined by a disulfide bond.

Belongs to the MliC family. Type 1 subfamily. Monomer.

The protein resides in the cell outer membrane. Functionally, specifically inhibits C-type lysozymes. In Escherichia coli (strain K12), this protein is Membrane-bound lysozyme inhibitor of C-type lysozyme.